A 137-amino-acid chain; its full sequence is Putative pre-16S rRNA nuclease (137 aa).

Belongs to the YqgF nuclease family.

It is found in the cytoplasm. Its function is as follows. Could be a nuclease involved in processing of the 5'-end of pre-16S rRNA. This is Putative pre-16S rRNA nuclease from Chromobacterium violaceum (strain ATCC 12472 / DSM 30191 / JCM 1249 / CCUG 213 / NBRC 12614 / NCIMB 9131 / NCTC 9757 / MK).